The following is a 240-amino-acid chain: 1-(5-phosphoribosyl)-5-[(5-phosphoribosylamino)methylideneamino] imidazole-4-carboxamide isomerase (240 aa).

The active-site Proton acceptor is aspartate 8. The Proton donor role is filled by aspartate 129.

The protein belongs to the HisA/HisF family.

The protein resides in the cytoplasm. It carries out the reaction 1-(5-phospho-beta-D-ribosyl)-5-[(5-phospho-beta-D-ribosylamino)methylideneamino]imidazole-4-carboxamide = 5-[(5-phospho-1-deoxy-D-ribulos-1-ylimino)methylamino]-1-(5-phospho-beta-D-ribosyl)imidazole-4-carboxamide. Its pathway is amino-acid biosynthesis; L-histidine biosynthesis; L-histidine from 5-phospho-alpha-D-ribose 1-diphosphate: step 4/9. The chain is 1-(5-phosphoribosyl)-5-[(5-phosphoribosylamino)methylideneamino] imidazole-4-carboxamide isomerase from Dinoroseobacter shibae (strain DSM 16493 / NCIMB 14021 / DFL 12).